A 423-amino-acid chain; its full sequence is Dihydroorotase-like protein (423 aa).

It belongs to the metallo-dependent hydrolases superfamily. DHOase family. PyrC' subfamily. As to quaternary structure, heterododecamer of 6 active PyrB subunits and 6 non-catalytic PyrC' subunits.

Non-functional DHOase. The sequence is that of Dihydroorotase-like protein (pyrC') from Pseudomonas aeruginosa (strain ATCC 15692 / DSM 22644 / CIP 104116 / JCM 14847 / LMG 12228 / 1C / PRS 101 / PAO1).